The primary structure comprises 97 residues: Large ribosomal subunit protein uL23 (97 aa).

Belongs to the universal ribosomal protein uL23 family. Part of the 50S ribosomal subunit. Contacts protein L29, and trigger factor when it is bound to the ribosome.

One of the early assembly proteins it binds 23S rRNA. One of the proteins that surrounds the polypeptide exit tunnel on the outside of the ribosome. Forms the main docking site for trigger factor binding to the ribosome. The protein is Large ribosomal subunit protein uL23 of Brucella melitensis biotype 2 (strain ATCC 23457).